Consider the following 234-residue polypeptide: Ribonuclease 3 (234 aa).

An RNase III domain is found at 6–134 (RKSLEERVGH…IVGALYLDGG (129 aa)). Mg(2+) is bound at residue Glu47. Asp51 is a catalytic residue. Positions 120 and 123 each coordinate Mg(2+). The active site involves Glu123. Positions 162-231 (DYKTRLQELV…AKNALEMKYK (70 aa)) constitute a DRBM domain.

The protein belongs to the ribonuclease III family. Homodimer. Mg(2+) serves as cofactor.

It localises to the cytoplasm. The enzyme catalyses Endonucleolytic cleavage to 5'-phosphomonoester.. Functionally, digests double-stranded RNA. Involved in the processing of primary rRNA transcript to yield the immediate precursors to the large and small rRNAs (23S and 16S). Processes some mRNAs, and tRNAs when they are encoded in the rRNA operon. Processes pre-crRNA and tracrRNA of type II CRISPR loci if present in the organism. The chain is Ribonuclease 3 from Bdellovibrio bacteriovorus (strain ATCC 15356 / DSM 50701 / NCIMB 9529 / HD100).